The chain runs to 135 residues: Small ribosomal subunit protein uS11 (135 aa).

Positions 1-22 (MPPKSRTAAGAKKVRRKEKKNV) are disordered.

Belongs to the universal ribosomal protein uS11 family. Part of the 30S ribosomal subunit. Interacts with proteins S7 and S18. Binds to IF-3.

Located on the platform of the 30S subunit, it bridges several disparate RNA helices of the 16S rRNA. Forms part of the Shine-Dalgarno cleft in the 70S ribosome. The sequence is that of Small ribosomal subunit protein uS11 from Nocardioides sp. (strain ATCC BAA-499 / JS614).